The sequence spans 957 residues: MSETNSAAETAAPHRYTAAMAADIEARWQDFWDAEGTYEAPNPTGDLAGDPELAARPKKFIMDMFPYPSGAGLHVGHPLGYIATDVYARHQRMTGHNVLHTLGFDAFGLPAEQYAVQTGTHPRVSTEANMENMKVQLRRLGLGHDNRRSFATIDSEYYKWTQWIFLQIFNSWYDSEADRARPIAELVEQFENGTRATPDGREWGALSAAERADLLSEYRLAYASDAPVNWSPGLGTVLANEEVTADGRSERGNFPVFKAKLRQWNMRITAYADRLLNDLDGLDWPEAIKLQQRNWIGRSEGARVEFPVDTAGGITVFTTRQDTLFGATYMVLAPEHDMVERIIPAAWPEGTHPVWTGGHASPAEAVTAYRKQAAAKSDVERQAEAKDKTGVFTGAYATNPVSGEKVPVFIADYVLMGYGTGAIMAVPAHDARDFAFARAFELPMRCVVQPSDDRGTDPATWDDAFSSYDAKLVNSANDEISLDGLGVVEAKARITEWLKEHGVGEGTVNFRLRDWLFSRQRYWGEPFPIVYDEDGIAHPLPESMLPLELPEVEDYSPRTFDPEDATAQPETPLSRNADWVNVTLDLGDGAGPRKYRRETNTMPNWAGSCWYELRYLDPNNDRQLVDPSIEQYWMGPREGQPTGGVDLYVGGAEHAVLHLLYARFWSKVLHDLGHISSAEPFHKLYNQGMIQAFVYRDSRGIAVPAAEVEERDGAFYHAGEKVSRVLGKMGKSLKNAVTPDEICAEYGADTLRLYEMAMGPLDVSRPWDTRAVVGQYRLLQRLWRNVVDEATGEVTVVDTEPDEDTLRALHKAIDGVGQDMAGMRFNTAIAKVTELNNHLTKAGGPLSRSVAERLVLLIAPLAPHIAEELWRRLGHADSVVHQDFPVADPAYVVDETVTCVVQIKGKVRARLEISPAITDEELEALALADEAVVAALGGAGIRKVIVRAPKLVNIVPA.

The 'HIGH' region motif lies at 66 to 77; that stretch reads PYPSGAGLHVGH. Positions 728–732 match the 'KMSKS' region motif; it reads KMGKS. K731 lines the ATP pocket.

It belongs to the class-I aminoacyl-tRNA synthetase family.

It localises to the cytoplasm. The enzyme catalyses tRNA(Leu) + L-leucine + ATP = L-leucyl-tRNA(Leu) + AMP + diphosphate. This is Leucine--tRNA ligase from Streptomyces griseus subsp. griseus (strain JCM 4626 / CBS 651.72 / NBRC 13350 / KCC S-0626 / ISP 5235).